Reading from the N-terminus, the 403-residue chain is S-adenosylmethionine synthase (403 aa).

His-16 lines the ATP pocket. Residue Asp-18 participates in Mg(2+) binding. Residue Glu-44 coordinates K(+). 2 residues coordinate L-methionine: Glu-57 and Gln-110. A flexible loop region spans residues 110-120 (QSAHIAQGVDA). Residues 175 to 177 (DSK), Asp-253, 259 to 260 (RK), Ala-276, and Lys-280 each bind ATP. Residue Asp-253 coordinates L-methionine. L-methionine is bound at residue Lys-284.

Belongs to the AdoMet synthase family. As to quaternary structure, homotetramer; dimer of dimers. The cofactor is Mg(2+). K(+) serves as cofactor.

Its subcellular location is the cytoplasm. The enzyme catalyses L-methionine + ATP + H2O = S-adenosyl-L-methionine + phosphate + diphosphate. Its pathway is amino-acid biosynthesis; S-adenosyl-L-methionine biosynthesis; S-adenosyl-L-methionine from L-methionine: step 1/1. Functionally, catalyzes the formation of S-adenosylmethionine (AdoMet) from methionine and ATP. The overall synthetic reaction is composed of two sequential steps, AdoMet formation and the subsequent tripolyphosphate hydrolysis which occurs prior to release of AdoMet from the enzyme. The sequence is that of S-adenosylmethionine synthase from Erythrobacter litoralis (strain HTCC2594).